Here is a 1406-residue protein sequence, read N- to C-terminus: DNA-directed RNA polymerase subunit beta' (1406 aa).

4 residues coordinate Zn(2+): Cys-70, Cys-72, Cys-85, and Cys-88. Mg(2+) is bound by residues Asp-460, Asp-462, and Asp-464. 4 residues coordinate Zn(2+): Cys-814, Cys-889, Cys-896, and Cys-899.

Belongs to the RNA polymerase beta' chain family. The RNAP catalytic core consists of 2 alpha, 1 beta, 1 beta' and 1 omega subunit. When a sigma factor is associated with the core the holoenzyme is formed, which can initiate transcription. Requires Mg(2+) as cofactor. Zn(2+) serves as cofactor.

The enzyme catalyses RNA(n) + a ribonucleoside 5'-triphosphate = RNA(n+1) + diphosphate. In terms of biological role, DNA-dependent RNA polymerase catalyzes the transcription of DNA into RNA using the four ribonucleoside triphosphates as substrates. This is DNA-directed RNA polymerase subunit beta' from Stenotrophomonas maltophilia (strain K279a).